Reading from the N-terminus, the 231-residue chain is Aminodeoxyfutalosine nucleosidase (231 aa).

The Proton acceptor role is filled by Glu-14. Substrate-binding positions include Gly-81, Val-155, and 175-176 (ME). Asp-199 serves as the catalytic Proton donor.

It belongs to the PNP/UDP phosphorylase family. In terms of assembly, homodimer.

It carries out the reaction 6-amino-6-deoxyfutalosine + H2O = dehypoxanthine futalosine + adenine. The enzyme catalyses S-adenosyl-L-homocysteine + H2O = S-(5-deoxy-D-ribos-5-yl)-L-homocysteine + adenine. It catalyses the reaction S-methyl-5'-thioadenosine + H2O = 5-(methylsulfanyl)-D-ribose + adenine. The catalysed reaction is 5'-deoxyadenosine + H2O = 5-deoxy-D-ribose + adenine. The protein operates within quinol/quinone metabolism; menaquinone biosynthesis. It participates in amino-acid biosynthesis; L-methionine biosynthesis via salvage pathway; S-methyl-5-thio-alpha-D-ribose 1-phosphate from S-methyl-5'-thioadenosine (hydrolase route): step 1/2. Catalyzes the direct conversion of aminodeoxyfutalosine (AFL) into dehypoxanthine futalosine (DHFL) and adenine via the hydrolysis of the N-glycosidic bond; this reaction seems to represent an essential step in the menaquinone biosynthesis pathway in Helicobacter species. Can also probably catalyzes the hydrolysis of 5'-methylthioadenosine (MTA) and S-adenosylhomocysteine (SAH) to adenine and the corresponding thioribose, 5'-methylthioribose and S-ribosylhomocysteine, respectively. These other activities highlight the tremendous versatility of the enzyme, which also plays key roles in S-adenosylmethionine recycling and in the biosynthesis of the quorum-sensing molecule autoinducer-2. Does not act on futalosine (FL) as substrate. The polypeptide is Aminodeoxyfutalosine nucleosidase (mtnN) (Helicobacter pylori (strain ATCC 700392 / 26695) (Campylobacter pylori)).